The sequence spans 327 residues: Phenylalanine--tRNA ligase alpha subunit (327 aa).

A Mg(2+)-binding site is contributed by Glu-252.

This sequence belongs to the class-II aminoacyl-tRNA synthetase family. Phe-tRNA synthetase alpha subunit type 1 subfamily. As to quaternary structure, tetramer of two alpha and two beta subunits. Mg(2+) serves as cofactor.

Its subcellular location is the cytoplasm. It carries out the reaction tRNA(Phe) + L-phenylalanine + ATP = L-phenylalanyl-tRNA(Phe) + AMP + diphosphate + H(+). This Shewanella frigidimarina (strain NCIMB 400) protein is Phenylalanine--tRNA ligase alpha subunit.